The sequence spans 659 residues: Threonine--tRNA ligase (659 aa).

Residues 7–70 enclose the TGS domain; that stretch reads DSELIKLTLP…QQDGAIEIVT (64 aa). Residues 253–555 form a catalytic region; sequence DHRKLGSELE…LIENFAGNFP (303 aa). Cys351, His402, and His532 together coordinate Zn(2+).

Belongs to the class-II aminoacyl-tRNA synthetase family. In terms of assembly, homodimer. Zn(2+) is required as a cofactor.

Its subcellular location is the cytoplasm. It carries out the reaction tRNA(Thr) + L-threonine + ATP = L-threonyl-tRNA(Thr) + AMP + diphosphate + H(+). In terms of biological role, catalyzes the attachment of threonine to tRNA(Thr) in a two-step reaction: L-threonine is first activated by ATP to form Thr-AMP and then transferred to the acceptor end of tRNA(Thr). Also edits incorrectly charged L-seryl-tRNA(Thr). The chain is Threonine--tRNA ligase from Chloroherpeton thalassium (strain ATCC 35110 / GB-78).